The primary structure comprises 497 residues: Trichoplein keratin filament-binding protein (497 aa).

3 coiled-coil regions span residues 67–140 (HCEK…LLYE), 166–271 (ATQK…ELGR), and 327–479 (MKQV…AKTM). The interaction with keratin proteins stretch occupies residues 72–457 (KEEKRKILEL…WEAARQEEEE (386 aa)). Residues 167–188 (TQKEEKKQQEATEKQENKRLEN) are disordered. Residues 168-188 (QKEEKKQQEATEKQENKRLEN) show a composition bias toward basic and acidic residues. A trichohyalin/plectin homology domain region spans residues 258–424 (RQMAALRRKT…KQLAQRAKEE (167 aa)). The segment at 441-497 (AERQGQEWEAARQEEEEEEEARQAEEHSNALLQQEAKTMAEKGYQPKLHGHLRIAWD) is disordered. Over residues 444–453 (QGQEWEAARQ) the composition is skewed to basic and acidic residues. A compositionally biased stretch (basic residues) spans 488–497 (LHGHLRIAWD).

The protein belongs to the TCHP family. Interacts specifically with keratin proteins including, KRT5, KRT6A, KRT8, KRT14, KRT16 and KRT18. Interacts with KCTD17. Ubiquitinated. Ubiquitination by the BCR(KCTD17) E3 ubiquitin ligase complex results in proteasomal degradation, and induces ciliogenesis. In terms of tissue distribution, expressed in all tissues examined, including brain, liver, small intestine, large intestine, lung and heart. Found concentrated in tubular structures within hepatocytes, and in the apical cortical region and desmosomes of the apical junctional domain in enterocytes of the small intestine. In the hair follicle, localized at the outer root sheath. Also expressed in blood vessels (at protein level).

The protein localises to the cytoplasm. It is found in the cytoskeleton. Its subcellular location is the cell membrane. It localises to the mitochondrion. The protein resides in the microtubule organizing center. The protein localises to the centrosome. Its function is as follows. Tumor suppressor which has the ability to inhibit cell growth and be pro-apoptotic during cell stress. May act as a 'capping' or 'branching' protein for keratin filaments in the cell periphery. May regulate K8/K18 filament and desmosome organization mainly at the apical or peripheral regions of simple epithelial cells. Is a negative regulator of ciliogenesis. This Mus musculus (Mouse) protein is Trichoplein keratin filament-binding protein.